The primary structure comprises 507 residues: Histidine ammonia-lyase (507 aa).

A cross-link (5-imidazolinone (Ala-Gly)) is located at residues Ala-141 to Gly-143. Ser-142 is subject to 2,3-didehydroalanine (Ser).

Belongs to the PAL/histidase family. In terms of processing, contains an active site 4-methylidene-imidazol-5-one (MIO), which is formed autocatalytically by cyclization and dehydration of residues Ala-Ser-Gly.

Its subcellular location is the cytoplasm. The catalysed reaction is L-histidine = trans-urocanate + NH4(+). It functions in the pathway amino-acid degradation; L-histidine degradation into L-glutamate; N-formimidoyl-L-glutamate from L-histidine: step 1/3. This is Histidine ammonia-lyase from Burkholderia pseudomallei (strain 1106a).